The following is a 172-amino-acid chain: uncharacterized protein (172 aa).

3 helical membrane passes run 44–68 (VLVS…AALT), 86–110 (LASY…VFSL), and 117–135 (VVFI…VTLF).

This sequence belongs to the chlamydial CPn_0442/CT_006/TC_0274 family.

It localises to the cell membrane. This is an uncharacterized protein from Chlamydia pneumoniae (Chlamydophila pneumoniae).